We begin with the raw amino-acid sequence, 180 residues long: MLKLLSEIGPVIAFFAGFFYGGGIQHATLYMLITSVICITLCYVIDKKVSKLSIISTTVLLVSGSITLISGDSMYIKIKPTILYVIFGIIFLMSGIRKNPFIKYALESIVRLKEESWITLSYRTAAFFFFMAVVNEVVWRNCSDETWVKFKVFGVIPITFIFILLQLPLLLKNKLPDSKI.

Helical transmembrane passes span 4–24, 25–45, 49–69, 76–96, 118–138, and 150–170; these read LLSE…GGGI, QHAT…CYVI, VSKL…ITLI, IKIK…MSGI, ITLS…NEVV, and FKVF…LPLL.

Belongs to the YciB family.

It localises to the cell inner membrane. In terms of biological role, plays a role in cell envelope biogenesis, maintenance of cell envelope integrity and membrane homeostasis. The protein is Inner membrane-spanning protein YciB of Rickettsia africae (strain ESF-5).